Reading from the N-terminus, the 968-residue chain is RNA polymerase-associated protein RapA (968 aa).

Positions 164 to 334 (DVGRRHAPRV…FARLRLLDPN (171 aa)) constitute a Helicase ATP-binding domain. Residue 177 to 184 (DEVGLGKT) participates in ATP binding. The short motif at 280 to 283 (DEAH) is the DEAH box element. The Helicase C-terminal domain maps to 490 to 644 (RVEWLMGYLT…TCPTGRAIYD (155 aa)).

This sequence belongs to the SNF2/RAD54 helicase family. RapA subfamily. Interacts with the RNAP. Has a higher affinity for the core RNAP than for the holoenzyme. Its ATPase activity is stimulated by binding to RNAP.

Transcription regulator that activates transcription by stimulating RNA polymerase (RNAP) recycling in case of stress conditions such as supercoiled DNA or high salt concentrations. Probably acts by releasing the RNAP, when it is trapped or immobilized on tightly supercoiled DNA. Does not activate transcription on linear DNA. Probably not involved in DNA repair. The protein is RNA polymerase-associated protein RapA of Salmonella arizonae (strain ATCC BAA-731 / CDC346-86 / RSK2980).